The sequence spans 269 residues: Ribosomal RNA small subunit methyltransferase A (269 aa).

The S-adenosyl-L-methionine site is built by His-11, Leu-13, Gly-38, Glu-59, Asp-84, and Asn-105.

This sequence belongs to the class I-like SAM-binding methyltransferase superfamily. rRNA adenine N(6)-methyltransferase family. RsmA subfamily.

The protein localises to the cytoplasm. The catalysed reaction is adenosine(1518)/adenosine(1519) in 16S rRNA + 4 S-adenosyl-L-methionine = N(6)-dimethyladenosine(1518)/N(6)-dimethyladenosine(1519) in 16S rRNA + 4 S-adenosyl-L-homocysteine + 4 H(+). Its function is as follows. Specifically dimethylates two adjacent adenosines (A1518 and A1519) in the loop of a conserved hairpin near the 3'-end of 16S rRNA in the 30S particle. May play a critical role in biogenesis of 30S subunits. This Acaryochloris marina (strain MBIC 11017) protein is Ribosomal RNA small subunit methyltransferase A.